A 439-amino-acid chain; its full sequence is Glutamyl-tRNA reductase (439 aa).

Residues 46–49, serine 111, 116–118, and glutamine 122 each bind substrate; these read TCNR and EGE. Cysteine 47 serves as the catalytic Nucleophile. 191-196 contributes to the NADP(+) binding site; the sequence is GTGAYA.

It belongs to the glutamyl-tRNA reductase family. Homodimer.

It carries out the reaction (S)-4-amino-5-oxopentanoate + tRNA(Glu) + NADP(+) = L-glutamyl-tRNA(Glu) + NADPH + H(+). Its pathway is porphyrin-containing compound metabolism; protoporphyrin-IX biosynthesis; 5-aminolevulinate from L-glutamyl-tRNA(Glu): step 1/2. Its function is as follows. Catalyzes the NADPH-dependent reduction of glutamyl-tRNA(Glu) to glutamate 1-semialdehyde (GSA). This is Glutamyl-tRNA reductase from Clavibacter michiganensis subsp. michiganensis (strain NCPPB 382).